Consider the following 428-residue polypeptide: MDTLRALEPLHRACQVCNLWPWRLAPPPDSEGILLRRSRWLELYGWTVLIAATSFTVYGLFQESSVEEKQDSESTISSIGHTVDFIQLVGMRVAHLAALLEALWQRQAQRGFFAELGEIDRLLSKALRVDVEAMRINMRRQTSRRAVWILWGYAVSQLLILGAKLLSRGDRFPIYWISYLLPLLVCGLRYFQIFNATQLVRQRLDVLLVALQQLQLHQKGPAVDTVLEEQEDLEEAAMDRLIAVRLVYQRVWALVALLNRCYGLSMLMQVGNDFLAITSNCYWMFLNFRQSAASPFDILQIVASGVWSAPHLGNVLVLSLLCDRTAQCASRLALCLHQVSVDLRNESHNALVGTLVRYCAPLIILVPLQITQFSLQLLHQRLHFSAAGFFNVDCTLLYTIVGATTTYLIILIQFHMSESTIGSDSNGQ.

Topologically, residues 1–40 (MDTLRALEPLHRACQVCNLWPWRLAPPPDSEGILLRRSRW) are cytoplasmic. Residues 41-61 (LELYGWTVLIAATSFTVYGLF) form a helical membrane-spanning segment. At 62 to 145 (QESSVEEKQD…INMRRQTSRR (84 aa)) the chain is on the extracellular side. A helical transmembrane segment spans residues 146 to 166 (AVWILWGYAVSQLLILGAKLL). The Cytoplasmic portion of the chain corresponds to 167 to 173 (SRGDRFP). Residues 174–194 (IYWISYLLPLLVCGLRYFQIF) traverse the membrane as a helical segment. Asn-195 carries an N-linked (GlcNAc...) asparagine glycan. At 195–250 (NATQLVRQRLDVLLVALQQLQLHQKGPAVDTVLEEQEDLEEAAMDRLIAVRLVYQR) the chain is on the extracellular side. The chain crosses the membrane as a helical span at residues 251 to 271 (VWALVALLNRCYGLSMLMQVG). Over 272–300 (NDFLAITSNCYWMFLNFRQSAASPFDILQ) the chain is Cytoplasmic. A helical membrane pass occupies residues 301 to 321 (IVASGVWSAPHLGNVLVLSLL). Over 322-349 (CDRTAQCASRLALCLHQVSVDLRNESHN) the chain is Extracellular. Asn-345 is a glycosylation site (N-linked (GlcNAc...) asparagine). The chain crosses the membrane as a helical span at residues 350–370 (ALVGTLVRYCAPLIILVPLQI). The Cytoplasmic portion of the chain corresponds to 371–395 (TQFSLQLLHQRLHFSAAGFFNVDCT). The chain crosses the membrane as a helical span at residues 396–416 (LLYTIVGATTTYLIILIQFHM). Topologically, residues 417 to 428 (SESTIGSDSNGQ) are extracellular.

It belongs to the insect chemoreceptor superfamily. Gustatory receptor (GR) family. Gr2a subfamily. In terms of tissue distribution, expressed in neurons of the terminal external chemosensory organ, the dorsal external chemosensory organ, as well as in the dorsal pharyngeal sense organ of larvae.

The protein resides in the cell membrane. In terms of biological role, probable gustatory receptor which mediates acceptance or avoidance behavior, depending on its not yet determined substrates. This is Putative gustatory receptor 2a (Gr2a) from Drosophila melanogaster (Fruit fly).